The chain runs to 704 residues: Meprin A subunit beta (704 aa).

The first 20 residues, 1–20 (MDARHWPWFLVFATFLLVSG), serve as a signal peptide directing secretion. The propeptide occupies 21-64 (LPAPEKFVKDIDGGIDQDIFDINEDLGLDLFEGDIKLEASGRNS). Residues 21–654 (LPAPEKFVKD…RCEKRGSTKD (634 aa)) are Extracellular-facing. Residues 63–257 (NSIIGDNYRW…LKLNQLYSCT (195 aa)) enclose the Peptidase M12A domain. 3 disulfides stabilise this stretch: Cys104–Cys256, Cys125–Cys145, and Cys266–Cys428. Position 153 (His153) interacts with Zn(2+). Residue Glu154 is part of the active site. Zn(2+)-binding residues include His157 and His163. 8 N-linked (GlcNAc...) asparagine glycosylation sites follow: Asn193, Asn219, Asn316, Asn422, Asn437, Asn528, Asn547, and Asn592. Residues 261 to 430 (SFMDSCDFEL…INLSETRCPH (170 aa)) enclose the MAM domain. An MATH domain is found at 431-585 (HIWHIQNFTQ…GDDVYILLTV (155 aa)). The region spanning 607–647 (VHNACSEVECQNGGICTLQEGRAECKCPAGEDWWYMGKRCE) is the EGF-like domain. Disulfide bonds link Cys611/Cys622, Cys616/Cys631, and Cys633/Cys646. Residues 655 to 678 (TIVIAVSSTVTVFAVMLIITLISV) traverse the membrane as a helical segment. Topologically, residues 679 to 704 (YCTRRKYRKKASAKTAAMNLENQHAF) are cytoplasmic. Residue Thr693 is modified to Phosphothreonine.

In terms of assembly, homotetramer consisting of disulfide-linked beta subunits, or heterotetramer of two alpha and two beta subunits formed by non-covalent association of two disulfide-linked heterodimers. Interacts with MBL2 through its carbohydrate moiety. This interaction may inhibit its catalytic activity. Interacts with TSPAN8. Zn(2+) is required as a cofactor. Post-translationally, N-glycosylated; contains high mannose and/or complex biantennary structures. Proteolytically activated by trypsin in the intestinal lumen and kallikrein-related peptidases in other tissues. In terms of processing, phosphorylated by PKC at multiple sites of its cytoplasmic part. Phosphorylation dcreases activity at the cell surface, leading to diminished substrate cleavage. Kidney, intestinal brush borders and salivary ducts.

The protein localises to the cell membrane. Its subcellular location is the secreted. The catalysed reaction is Hydrolysis of proteins, including azocasein, and peptides. Hydrolysis of 5-His-|-Leu-6, 6-Leu-|-Cys-7, 14-Ala-|-Leu-15 and 19-Cys-|-Gly-20 bonds in insulin B chain.. Its activity is regulated as follows. Strongly inhibited by fetuin-A/AHSG. Functionally, membrane metallopeptidase that sheds many membrane-bound proteins. Exhibits a strong preference for acidic amino acids at the P1' position. Known substrates include: FGF19, VGFA, IL1B, IL18, procollagen I and III, E-cadherin, KLK7, gastrin, ADAM10, tenascin-C. The presence of several pro-inflammatory cytokine among substrates implicate MEP1B in inflammation. It is also involved in tissue remodeling due to its capability to degrade extracellular matrix components. This is Meprin A subunit beta (Mep1b) from Rattus norvegicus (Rat).